Reading from the N-terminus, the 115-residue chain is UPF0102 protein NMB2089 (115 aa).

Belongs to the UPF0102 family.

This chain is UPF0102 protein NMB2089, found in Neisseria meningitidis serogroup B (strain ATCC BAA-335 / MC58).